A 378-amino-acid polypeptide reads, in one-letter code: Succinyl-diaminopimelate desuccinylase (378 aa).

His-77 serves as a coordination point for Zn(2+). Asp-79 is a catalytic residue. Asp-108 lines the Zn(2+) pocket. The active-site Proton acceptor is Glu-138. Residues Glu-139, Glu-167, and His-350 each coordinate Zn(2+).

This sequence belongs to the peptidase M20A family. DapE subfamily. Homodimer. The cofactor is Zn(2+). Co(2+) is required as a cofactor.

The enzyme catalyses N-succinyl-(2S,6S)-2,6-diaminopimelate + H2O = (2S,6S)-2,6-diaminopimelate + succinate. It functions in the pathway amino-acid biosynthesis; L-lysine biosynthesis via DAP pathway; LL-2,6-diaminopimelate from (S)-tetrahydrodipicolinate (succinylase route): step 3/3. Its function is as follows. Catalyzes the hydrolysis of N-succinyl-L,L-diaminopimelic acid (SDAP), forming succinate and LL-2,6-diaminopimelate (DAP), an intermediate involved in the bacterial biosynthesis of lysine and meso-diaminopimelic acid, an essential component of bacterial cell walls. The sequence is that of Succinyl-diaminopimelate desuccinylase from Erythrobacter litoralis (strain HTCC2594).